A 397-amino-acid polypeptide reads, in one-letter code: L-rhamnonate dehydratase (397 aa).

His-25 and Arg-51 together coordinate substrate. Mg(2+) contacts are provided by Asp-217, Glu-243, and Glu-271. The Proton acceptor role is filled by His-321. Glu-341 is a binding site for substrate.

The protein belongs to the mandelate racemase/muconate lactonizing enzyme family. RhamD subfamily. As to quaternary structure, homooctamer; tetramer of dimers. Mg(2+) is required as a cofactor.

The catalysed reaction is L-rhamnonate = 2-dehydro-3-deoxy-L-rhamnonate + H2O. The protein operates within carbohydrate degradation; L-rhamnose degradation. In terms of biological role, catalyzes the dehydration of L-rhamnonate to 2-keto-3-deoxy-L-rhamnonate (KDR). Also shows activity with L-lyxonate and L-mannonate, with much lower catalytic efficiency. Catalyzes the third step in an alternative pathway for rhamnose utilization that does not involve phosphorylated intermediates. In Sphingomonas sp. (strain SKA58), this protein is L-rhamnonate dehydratase.